Here is a 407-residue protein sequence, read N- to C-terminus: Naringenin 8-dimethylallyltransferase 2, chloroplastic (407 aa).

The N-terminal 23 residues, 1–23 (MGFVLPASFPGASSITTGGSCLR), are a transit peptide targeting the chloroplast. 8 consecutive transmembrane segments (helical) span residues 117 to 137 (FCRP…SLVA), 145 to 165 (SLAF…IHIF), 206 to 226 (ILGL…TVFI), 248 to 268 (VLTA…GFFL), 285 to 305 (LIFC…FKDI), 328 to 348 (VFWI…LVGA), 352 to 372 (ILWS…VLWY), and 383 to 403 (VVLQ…YCLI).

It belongs to the UbiA prenyltransferase family. Mg(2+) is required as a cofactor. Mn(2+) serves as cofactor.

The protein resides in the plastid. Its subcellular location is the chloroplast membrane. It catalyses the reaction (2S)-naringenin + dimethylallyl diphosphate = sophoraflavanone B + diphosphate. In terms of biological role, involved in the biosynthesis of sophoraflavanone G (SFG). Can use flavanones (naringenin, liquiritigenin and hesperetin) as substrates, but not flavonols or isoflavones. Shows a strict specificity for dimethylallyl diphosphate. This Sophora flavescens (Shrubby sophora) protein is Naringenin 8-dimethylallyltransferase 2, chloroplastic (N8DT-2).